Consider the following 262-residue polypeptide: Type III pantothenate kinase (262 aa).

ATP is bound at residue 9 to 16 (DAGNSRIK). Substrate-binding positions include tyrosine 96 and 103-106 (GSDR). Catalysis depends on aspartate 105, which acts as the Proton acceptor. Threonine 129 contacts ATP. Residue threonine 189 coordinates substrate.

This sequence belongs to the type III pantothenate kinase family. In terms of assembly, homodimer. NH4(+) is required as a cofactor. It depends on K(+) as a cofactor.

It localises to the cytoplasm. The enzyme catalyses (R)-pantothenate + ATP = (R)-4'-phosphopantothenate + ADP + H(+). It functions in the pathway cofactor biosynthesis; coenzyme A biosynthesis; CoA from (R)-pantothenate: step 1/5. Its function is as follows. Catalyzes the phosphorylation of pantothenate (Pan), the first step in CoA biosynthesis. The chain is Type III pantothenate kinase from Burkholderia ambifaria (strain MC40-6).